The sequence spans 198 residues: Adenylyl-sulfate kinase (198 aa).

Residue 31-38 (GLSGAGKS) coordinates ATP. Residue S105 is the Phosphoserine intermediate of the active site.

It belongs to the APS kinase family.

It carries out the reaction adenosine 5'-phosphosulfate + ATP = 3'-phosphoadenylyl sulfate + ADP + H(+). The protein operates within sulfur metabolism; hydrogen sulfide biosynthesis; sulfite from sulfate: step 2/3. Its function is as follows. Catalyzes the synthesis of activated sulfate. In Shewanella amazonensis (strain ATCC BAA-1098 / SB2B), this protein is Adenylyl-sulfate kinase.